We begin with the raw amino-acid sequence, 151 residues long: MMALLHKEKLIECIENEVLSGGTVLLLVKNIVVSEISYMGDSYKYFTFNANHDLKSKEDLKGATSKNIAKMIYNWIIKNPQNNKIWSGEPRTQIYFENDLYHTNYNHECIKDFWNVSTSVGPCIFNDRSIWCTKCTSFYPFTNIMSPNIFQ.

Belongs to the asfivirus A151R family. In terms of assembly, monomer. Homodimer. Interacts with protein B119L. Interacts with membrane protein E248R. Zn(2+) is required as a cofactor.

May participate in a redox cascade for the formation of disulfide bonds in viral proteins. The protein is Protein A151R of Ornithodoros (relapsing fever ticks).